The chain runs to 457 residues: Bifunctional protein GlmU (457 aa).

Positions 1 to 230 (MSKRYAVVLA…FEESLGVNDR (230 aa)) are pyrophosphorylase. UDP-N-acetyl-alpha-D-glucosamine contacts are provided by residues 9-12 (LAAG), K23, Q73, and 78-79 (GT). Mg(2+) is bound at residue D103. UDP-N-acetyl-alpha-D-glucosamine-binding residues include G140, E155, N170, and N228. A Mg(2+)-binding site is contributed by N228. Residues 231–251 (IALAEASKLMQRRINDNHMRN) form a linker region. The segment at 252–457 (GVTLVNPENT…DYAKRLNHGK (206 aa)) is N-acetyltransferase. R333 and K351 together coordinate UDP-N-acetyl-alpha-D-glucosamine. H363 (proton acceptor) is an active-site residue. Positions 366 and 377 each coordinate UDP-N-acetyl-alpha-D-glucosamine. Residues 386–387 (NY), A423, and R440 each bind acetyl-CoA.

It in the N-terminal section; belongs to the N-acetylglucosamine-1-phosphate uridyltransferase family. This sequence in the C-terminal section; belongs to the transferase hexapeptide repeat family. Homotrimer. Mg(2+) is required as a cofactor.

The protein resides in the cytoplasm. The catalysed reaction is alpha-D-glucosamine 1-phosphate + acetyl-CoA = N-acetyl-alpha-D-glucosamine 1-phosphate + CoA + H(+). It carries out the reaction N-acetyl-alpha-D-glucosamine 1-phosphate + UTP + H(+) = UDP-N-acetyl-alpha-D-glucosamine + diphosphate. Its pathway is nucleotide-sugar biosynthesis; UDP-N-acetyl-alpha-D-glucosamine biosynthesis; N-acetyl-alpha-D-glucosamine 1-phosphate from alpha-D-glucosamine 6-phosphate (route II): step 2/2. It participates in nucleotide-sugar biosynthesis; UDP-N-acetyl-alpha-D-glucosamine biosynthesis; UDP-N-acetyl-alpha-D-glucosamine from N-acetyl-alpha-D-glucosamine 1-phosphate: step 1/1. The protein operates within bacterial outer membrane biogenesis; LPS lipid A biosynthesis. Catalyzes the last two sequential reactions in the de novo biosynthetic pathway for UDP-N-acetylglucosamine (UDP-GlcNAc). The C-terminal domain catalyzes the transfer of acetyl group from acetyl coenzyme A to glucosamine-1-phosphate (GlcN-1-P) to produce N-acetylglucosamine-1-phosphate (GlcNAc-1-P), which is converted into UDP-GlcNAc by the transfer of uridine 5-monophosphate (from uridine 5-triphosphate), a reaction catalyzed by the N-terminal domain. The sequence is that of Bifunctional protein GlmU from Listeria welshimeri serovar 6b (strain ATCC 35897 / DSM 20650 / CCUG 15529 / CIP 8149 / NCTC 11857 / SLCC 5334 / V8).